The primary structure comprises 353 residues: Photosystem II protein D1 (353 aa).

Residue Thr-2 is modified to N-acetylthreonine. A Phosphothreonine modification is found at Thr-2. 3 helical membrane-spanning segments follow: residues 29 to 46, 118 to 133, and 142 to 156; these read NIGW…TATS, HFLL…EWEL, and WIAV…AATA. Residue His-118 coordinates chlorophyll a. Pheophytin a is bound at residue Tyr-126. Residues Asp-170 and Glu-189 each contribute to the [CaMn4O5] cluster site. Residues 197-218 form a helical membrane-spanning segment; sequence FHMLGVAGVFGGSLFSAMHGSL. His-198 contributes to the chlorophyll a binding site. A quinone contacts are provided by residues His-215 and 264–265; that span reads SF. Fe cation is bound at residue His-215. His-272 lines the Fe cation pocket. A helical transmembrane segment spans residues 274-288; sequence FLAAWPVVGIWFTAL. Positions 332, 333, 342, and 344 each coordinate [CaMn4O5] cluster. Residues 345–353 constitute a propeptide that is removed on maturation; that stretch reads AVEAPAVNG.

This sequence belongs to the reaction center PufL/M/PsbA/D family. PSII is composed of 1 copy each of membrane proteins PsbA, PsbB, PsbC, PsbD, PsbE, PsbF, PsbH, PsbI, PsbJ, PsbK, PsbL, PsbM, PsbT, PsbX, PsbY, PsbZ, Psb30/Ycf12, at least 3 peripheral proteins of the oxygen-evolving complex and a large number of cofactors. It forms dimeric complexes. The cofactor is The D1/D2 heterodimer binds P680, chlorophylls that are the primary electron donor of PSII, and subsequent electron acceptors. It shares a non-heme iron and each subunit binds pheophytin, quinone, additional chlorophylls, carotenoids and lipids. D1 provides most of the ligands for the Mn4-Ca-O5 cluster of the oxygen-evolving complex (OEC). There is also a Cl(-1) ion associated with D1 and D2, which is required for oxygen evolution. The PSII complex binds additional chlorophylls, carotenoids and specific lipids.. Post-translationally, tyr-161 forms a radical intermediate that is referred to as redox-active TyrZ, YZ or Y-Z. C-terminally processed by CTPA; processing is essential to allow assembly of the oxygen-evolving complex and thus photosynthetic growth.

The protein resides in the plastid. It localises to the chloroplast thylakoid membrane. It catalyses the reaction 2 a plastoquinone + 4 hnu + 2 H2O = 2 a plastoquinol + O2. In terms of biological role, photosystem II (PSII) is a light-driven water:plastoquinone oxidoreductase that uses light energy to abstract electrons from H(2)O, generating O(2) and a proton gradient subsequently used for ATP formation. It consists of a core antenna complex that captures photons, and an electron transfer chain that converts photonic excitation into a charge separation. The D1/D2 (PsbA/PsbD) reaction center heterodimer binds P680, the primary electron donor of PSII as well as several subsequent electron acceptors. The chain is Photosystem II protein D1 from Dumortiera hirsuta (Liverwort).